The chain runs to 840 residues: OTU domain-containing protein 7B (840 aa).

Residues 49 to 88 are disordered; that stretch reads AGNLSPPFSGGSTCPKTPEKGGSDREPTRPSRPILQRQDD. Basic and acidic residues predominate over residues 65 to 77; it reads TPEKGGSDREPTR. Ser-100 bears the Phosphoserine mark. The interval 152–401 is TRAF-binding; the sequence is ERDLIEQSML…AVDPGKGWEW (250 aa). Positions 167 to 440 are catalytic; the sequence is AGRLNWWVSM…VKWIPLSSDS (274 aa). The OTU domain occupies 183–365; it reads LLPLATTGDG…QAHFSALVSM (183 aa). Positions 187–193 are regulatory loop; it reads ATTGDGN. Asp-191 is a catalytic residue. The active-site Nucleophile is the Cys-194. Residue His-358 is the Proton acceptor of the active site. The span at 440–452 shows a compositional bias: polar residues; sequence SQAPLAQPESPTA. 2 disordered regions span residues 440–592 and 653–710; these read SQAP…YSQE and IMNG…VHCQ. Basic and acidic residues-rich tracts occupy residues 456–471 and 488–500; these read DEPR…DKES and SKRD…KRAD. Phosphoserine occurs at positions 464, 467, and 471. Positions 483 to 498 match the Nuclear localization signal motif; that stretch reads RRKEKSKRDREKDKKR. Residues 531–541 are compositionally biased toward gly residues; sequence KPGGLGSGSGI. Thr-730 bears the Phosphothreonine mark. Residues 793-828 form an A20-type zinc finger; the sequence is PPTQTKCKQPNCSFYGHPETNNLCSCCYREELRRRE. Positions 799, 804, 816, and 819 each coordinate Zn(2+).

Belongs to the peptidase C64 family. Interacts with TRAF6. Interacts with PARK7, leading to inhibit deubiquitinase activity. Interacts with EGFR, ITCH and NEDD4. Interacts with TRAF3. Interacts with ZAP70 in activated T cells, but not in resting T cells. In terms of processing, phosphorylated by EGFR.

The protein localises to the cytoplasm. Its subcellular location is the nucleus. The enzyme catalyses Thiol-dependent hydrolysis of ester, thioester, amide, peptide and isopeptide bonds formed by the C-terminal Gly of ubiquitin (a 76-residue protein attached to proteins as an intracellular targeting signal).. Its activity is regulated as follows. Deubiquitinase activity is inhibited following interaction with PARK7. In terms of biological role, negative regulator of the non-canonical NF-kappa-B pathway that acts by mediating deubiquitination of TRAF3, an inhibitor of the NF-kappa-B pathway, thereby acting as a negative regulator of B-cell responses. In response to non-canonical NF-kappa-B stimuli, deubiquitinates 'Lys-48'-linked polyubiquitin chains of TRAF3, preventing TRAF3 proteolysis and over-activation of non-canonical NF-kappa-B. Negatively regulates mucosal immunity against infections. Deubiquitinates ZAP70, and thereby regulates T cell receptor (TCR) signaling that leads to the activation of NF-kappa-B. Plays a role in T cell homeostasis and is required for normal T cell responses, including production of IFNG and IL2. Mediates deubiquitination of EGFR. Has deubiquitinating activity toward 'Lys-11', 'Lys-48' and 'Lys-63'-linked polyubiquitin chains. Has a much higher catalytic rate with 'Lys-11'-linked polyubiquitin chains (in vitro); however the physiological significance of these data are unsure. Hydrolyzes both linear and branched forms of polyubiquitin. Acts as a regulator of mTORC1 and mTORC2 assembly by mediating 'Lys-63'-linked deubiquitination of MLST8, thereby promoting assembly of the mTORC2 complex, while inibiting formation of the mTORC1 complex. The protein is OTU domain-containing protein 7B (Otud7b) of Mus musculus (Mouse).